The sequence spans 497 residues: UPF0371 protein cu0538 (497 aa).

Belongs to the UPF0371 family.

This chain is UPF0371 protein cu0538, found in Corynebacterium urealyticum (strain ATCC 43042 / DSM 7109).